A 613-amino-acid polypeptide reads, in one-letter code: Carotenoid dioxygenase (613 aa).

The tract at residues 1–25 (MSPHEVIGTVPKNSTTFRTQADEHD) is disordered. 4 residues coordinate Fe(2+): His-261, His-313, His-383, and His-595.

Belongs to the carotenoid oxygenase family. Fe(2+) serves as cofactor.

It is found in the cytoplasm. Its subcellular location is the cytosol. The catalysed reaction is torulene + O2 = 4'-apo-beta-carotenal + 3-methyl-2-butenal. Its pathway is carotenoid biosynthesis. Its function is as follows. Torulene dioxygenase; part of pathway that mediates the biosynthesis of neurosporaxanthin, a carboxylic apocarotenoid acting as an essential protective pigments and leading to orange pigmentation. Cao-2 mediates the cleavage of torulene into beta-apo-4'-carotenal, the aldehyde corresponding to the acidic neurosporaxanthin. Is not able to use gamma-carotene (that it is not desaturated at the C4'-C5' bond) as substrate, which suggests a high specificity of cao-2 in cleaving the C4'-C5' double bond. Neurosporaxanthin is synthesized from geranyl-geranyl pyrophosphate (GGPP) through several enzymatic activities. Phytoene synthase activity performed by the bifunctional enzyme al-2 first produces phytoene from geranyl-geranyl pyrophosphate (GGPP). The phytoene dehydrogenase al-1 then introduces 5 desaturations to lead to 3,4-didehydrolycopene via the intermediates phytofluene, zeta-carotene, neurosporene and lycopene. Al-2 cyclase activity then converts 3,4-didehydrolycopene into torulene. Al-2 can also convet lycopene into gamma-carotene which in turn is converted to beta-carotene by an additional al-2 cyclization reaction. Torulene is the substrate of the dioxidase cao-2 that breaks the molecule, removing five carbon atoms to yield beta-apo-4'-carotenal, whereas the aldehyde dehydrogenase ylo-1 mediates the last step by converting beta-apo-4'-carotenal into neurosporaxanthin. In Neurospora crassa (strain ATCC 24698 / 74-OR23-1A / CBS 708.71 / DSM 1257 / FGSC 987), this protein is Carotenoid dioxygenase.